Consider the following 287-residue polypeptide: Very long chain fatty acid elongase 4 (287 aa).

A run of 3 helical transmembrane segments spans residues 33 to 53, 64 to 84, and 115 to 135; these read ILVYCCVLYILLVFMVPEHIM, PFVFWNIGLCLFSFCGAYSCV, and FWVFYFILSKIPEMIDTVFLV. The short motif at 145–149 is the HxxHH motif element; it reads HWYHH. His-148 functions as the Nucleophile in the catalytic mechanism. 4 helical membrane passes run 150 to 170, 172 to 192, 199 to 219, and 241 to 261; these read LTVAIFCWHAGHALIPSGLWF, TMNYCVHSIMYFYYFMCACGM, IAPFITMMQLLQMVAGTLIVL, and LGLVMYGSYFFLFAVLFGKLY.

This sequence belongs to the ELO family.

It is found in the membrane. The enzyme catalyses a very-long-chain acyl-CoA + malonyl-CoA + H(+) = a very-long-chain 3-oxoacyl-CoA + CO2 + CoA. Involved in the synthesis of fatty acids. Elongates C16:0 and C18:0 fatty acids to C26:0, with C24:0 being the main product. This is Very long chain fatty acid elongase 4 from Trypanosoma cruzi (strain CL Brener).